We begin with the raw amino-acid sequence, 312 residues long: tRNA dimethylallyltransferase (312 aa).

15–22 (GPTAAGKS) contributes to the ATP binding site. Residue 17–22 (TAAGKS) coordinates substrate. The interaction with substrate tRNA stretch occupies residues 40–43 (DSMQ).

This sequence belongs to the IPP transferase family. In terms of assembly, monomer. It depends on Mg(2+) as a cofactor.

The catalysed reaction is adenosine(37) in tRNA + dimethylallyl diphosphate = N(6)-dimethylallyladenosine(37) in tRNA + diphosphate. In terms of biological role, catalyzes the transfer of a dimethylallyl group onto the adenine at position 37 in tRNAs that read codons beginning with uridine, leading to the formation of N6-(dimethylallyl)adenosine (i(6)A). The chain is tRNA dimethylallyltransferase from Streptomyces coelicolor (strain ATCC BAA-471 / A3(2) / M145).